A 157-amino-acid polypeptide reads, in one-letter code: Protein PEROXIN-4 (157 aa).

In terms of domain architecture, UBC core spans 3 to 153; the sequence is ASRARLFKEY…AQMYTRLAAM (151 aa). The Glycyl thioester intermediate role is filled by C90.

It belongs to the ubiquitin-conjugating enzyme family. As to quaternary structure, interacts with PEX22.

It localises to the peroxisome membrane. The catalysed reaction is S-ubiquitinyl-[E1 ubiquitin-activating enzyme]-L-cysteine + [E2 ubiquitin-conjugating enzyme]-L-cysteine = [E1 ubiquitin-activating enzyme]-L-cysteine + S-ubiquitinyl-[E2 ubiquitin-conjugating enzyme]-L-cysteine.. It participates in protein modification; protein ubiquitination. Its function is as follows. Required for peroxisome biogenesis. Necessary for the developmental elimination of obsolete peroxisome matrix proteins. May be involved in the ubiquitination of PEX5, targeting it for recycling. Accepts the ubiquitin from the E1 complex and catalyzes its covalent attachment to other proteins. The protein is Protein PEROXIN-4 (PEX4) of Arabidopsis thaliana (Mouse-ear cress).